Here is a 312-residue protein sequence, read N- to C-terminus: Beta-ketoacyl-[acyl-carrier-protein] synthase III (312 aa).

Catalysis depends on residues C112 and H237. Positions 238-242 (QANIR) are ACP-binding. N267 is an active-site residue.

This sequence belongs to the thiolase-like superfamily. FabH family. Homodimer.

The protein localises to the cytoplasm. It catalyses the reaction malonyl-[ACP] + acetyl-CoA + H(+) = 3-oxobutanoyl-[ACP] + CO2 + CoA. It participates in lipid metabolism; fatty acid biosynthesis. Its function is as follows. Catalyzes the condensation reaction of fatty acid synthesis by the addition to an acyl acceptor of two carbons from malonyl-ACP. Catalyzes the first condensation reaction which initiates fatty acid synthesis and may therefore play a role in governing the total rate of fatty acid production. Possesses both acetoacetyl-ACP synthase and acetyl transacylase activities. Its substrate specificity determines the biosynthesis of branched-chain and/or straight-chain of fatty acids. The protein is Beta-ketoacyl-[acyl-carrier-protein] synthase III of Oceanobacillus iheyensis (strain DSM 14371 / CIP 107618 / JCM 11309 / KCTC 3954 / HTE831).